We begin with the raw amino-acid sequence, 500 residues long: NAD(P)H-quinone oxidoreductase chain 4, chloroplastic (500 aa).

14 helical membrane-spanning segments follow: residues 4 to 24, 35 to 55, 87 to 107, 113 to 130, 134 to 154, 167 to 187, 207 to 227, 242 to 262, 272 to 292, 305 to 325, 330 to 350, 386 to 406, 416 to 436, and 462 to 482; these read FPWL…IFFL, YTIC…CYHF, LGPV…AWPV, LFHF…GSFS, LLLF…LLSM, FILY…GVGL, VALE…KLPI, HYST…YGLI, AHSI…IYAA, IAYS…SITD, GAIL…FLAG, LALP…GIIT, IAIT…LLSM, and LFVS…PDFV.

This sequence belongs to the complex I subunit 4 family.

The protein localises to the plastid. The protein resides in the chloroplast thylakoid membrane. It catalyses the reaction a plastoquinone + NADH + (n+1) H(+)(in) = a plastoquinol + NAD(+) + n H(+)(out). The catalysed reaction is a plastoquinone + NADPH + (n+1) H(+)(in) = a plastoquinol + NADP(+) + n H(+)(out). This chain is NAD(P)H-quinone oxidoreductase chain 4, chloroplastic, found in Helianthus annuus (Common sunflower).